The primary structure comprises 66 residues: uncharacterized protein (66 aa).

A run of 2 helical transmembrane segments spans residues 3 to 23 (LIHV…PFAN) and 34 to 54 (FILA…AIVY).

The protein localises to the cell membrane. This is an uncharacterized protein from Bacillus subtilis (strain 168).